The primary structure comprises 394 residues: Elongation factor Tu 2 (394 aa).

The tr-type G domain occupies 10 to 204 (KPHVNVGTIG…ALDSYIPEPE (195 aa)). A G1 region spans residues 19-26 (GHVDHGKT). 19-26 (GHVDHGKT) lines the GTP pocket. Mg(2+) is bound at residue T26. Positions 60–64 (GITIN) are G2. Residues 81–84 (DCPG) form a G3 region. Residues 81–85 (DCPGH) and 136–139 (NKCD) contribute to the GTP site. The tract at residues 136–139 (NKCD) is G4. The interval 174 to 176 (SAL) is G5.

It belongs to the TRAFAC class translation factor GTPase superfamily. Classic translation factor GTPase family. EF-Tu/EF-1A subfamily. In terms of assembly, monomer.

The protein localises to the cytoplasm. It carries out the reaction GTP + H2O = GDP + phosphate + H(+). GTP hydrolase that promotes the GTP-dependent binding of aminoacyl-tRNA to the A-site of ribosomes during protein biosynthesis. This Shewanella oneidensis (strain ATCC 700550 / JCM 31522 / CIP 106686 / LMG 19005 / NCIMB 14063 / MR-1) protein is Elongation factor Tu 2.